The following is a 774-amino-acid chain: Effector protein hopW1-1 (774 aa).

Disordered stretches follow at residues Met1–Gln33 and Cys301–Gln340. The segment covering Thr9 to Ser23 has biased composition (low complexity). Over residues Ala24–Gln33 the composition is skewed to polar residues.

The protein belongs to the HopW family. In terms of assembly, interacts (via C-terminus) with Arabidopsis WIN1, WIN2 and WIN3.

It localises to the secreted. In terms of biological role, induces hypersensitive response (HR). This Pseudomonas syringae pv. maculicola protein is Effector protein hopW1-1 (hopW1-1).